Here is a 299-residue protein sequence, read N- to C-terminus: Light-independent protochlorophyllide reductase iron-sulfur ATP-binding protein (299 aa).

Residues 1 to 23 (MSPLDRTPPSLRGQDGEGSVQVH) form a disordered region. ATP-binding positions include 43-48 (GIGKST) and Lys72. Ser47 serves as a coordination point for Mg(2+). [4Fe-4S] cluster contacts are provided by Cys128 and Cys162. ATP-binding positions include 213–214 (NR) and 237–239 (PDL).

It belongs to the NifH/BchL/ChlL family. As to quaternary structure, homodimer. Protochlorophyllide reductase is composed of three subunits; BchL, BchN and BchB. [4Fe-4S] cluster is required as a cofactor.

The catalysed reaction is chlorophyllide a + oxidized 2[4Fe-4S]-[ferredoxin] + 2 ADP + 2 phosphate = protochlorophyllide a + reduced 2[4Fe-4S]-[ferredoxin] + 2 ATP + 2 H2O. It participates in porphyrin-containing compound metabolism; bacteriochlorophyll biosynthesis (light-independent). Its function is as follows. Component of the dark-operative protochlorophyllide reductase (DPOR) that uses Mg-ATP and reduced ferredoxin to reduce ring D of protochlorophyllide (Pchlide) to form chlorophyllide a (Chlide). This reaction is light-independent. The L component serves as a unique electron donor to the NB-component of the complex, and binds Mg-ATP. The sequence is that of Light-independent protochlorophyllide reductase iron-sulfur ATP-binding protein from Roseobacter denitrificans (strain ATCC 33942 / OCh 114) (Erythrobacter sp. (strain OCh 114)).